The chain runs to 122 residues: Large ribosomal subunit protein uL14 (122 aa).

It belongs to the universal ribosomal protein uL14 family. As to quaternary structure, part of the 50S ribosomal subunit. Forms a cluster with proteins L3 and L19. In the 70S ribosome, L14 and L19 interact and together make contacts with the 16S rRNA in bridges B5 and B8.

Its function is as follows. Binds to 23S rRNA. Forms part of two intersubunit bridges in the 70S ribosome. This Brucella anthropi (strain ATCC 49188 / DSM 6882 / CCUG 24695 / JCM 21032 / LMG 3331 / NBRC 15819 / NCTC 12168 / Alc 37) (Ochrobactrum anthropi) protein is Large ribosomal subunit protein uL14.